A 306-amino-acid polypeptide reads, in one-letter code: Curved DNA-binding protein (306 aa).

A J domain is found at 5–69 (DYYAIMGVKP…QRRAEYDQMW (65 aa)).

The protein localises to the cytoplasm. The protein resides in the nucleoid. In terms of biological role, DNA-binding protein that preferentially recognizes a curved DNA sequence. It is probably a functional analog of DnaJ; displays overlapping activities with DnaJ, but functions under different conditions, probably acting as a molecular chaperone in an adaptive response to environmental stresses other than heat shock. Lacks autonomous chaperone activity; binds native substrates and targets them for recognition by DnaK. Its activity is inhibited by the binding of CbpM. The chain is Curved DNA-binding protein from Escherichia coli O157:H7.